A 327-amino-acid chain; its full sequence is GMP reductase (327 aa).

The active-site Thioimidate intermediate is the Cys-175. 204-227 (IIADGGIRTHGDVAKSIRFGATMV) provides a ligand contact to NADP(+).

The protein belongs to the IMPDH/GMPR family. GuaC type 2 subfamily.

The catalysed reaction is IMP + NH4(+) + NADP(+) = GMP + NADPH + 2 H(+). In terms of biological role, catalyzes the irreversible NADPH-dependent deamination of GMP to IMP. It functions in the conversion of nucleobase, nucleoside and nucleotide derivatives of G to A nucleotides, and in maintaining the intracellular balance of A and G nucleotides. The polypeptide is GMP reductase (Bacillus cereus (strain ATCC 10987 / NRS 248)).